The following is a 243-amino-acid chain: Small ribosomal subunit protein uS3 (243 aa).

Positions 38-106 (IRKYLNARLA…DIQINIFEVK (69 aa)) constitute a KH type-2 domain. The segment at 214 to 243 (PNFTQSKESGRGNNGGNNGGKNFKRKKNNR) is disordered.

The protein belongs to the universal ribosomal protein uS3 family. As to quaternary structure, part of the 30S ribosomal subunit. Forms a tight complex with proteins S10 and S14.

Functionally, binds the lower part of the 30S subunit head. Binds mRNA in the 70S ribosome, positioning it for translation. This is Small ribosomal subunit protein uS3 from Bacteroides thetaiotaomicron (strain ATCC 29148 / DSM 2079 / JCM 5827 / CCUG 10774 / NCTC 10582 / VPI-5482 / E50).